The chain runs to 238 residues: Uridylate kinase (238 aa).

Residue 12–15 coordinates ATP; it reads KLSG. Gly54 is a binding site for UMP. ATP contacts are provided by Gly55 and Arg59. Residues Asp74 and 135–142 contribute to the UMP site; that span reads TGNPFFTT. Positions 162, 163, 168, and 171 each coordinate ATP.

The protein belongs to the UMP kinase family. In terms of assembly, homohexamer.

It localises to the cytoplasm. It carries out the reaction UMP + ATP = UDP + ADP. It functions in the pathway pyrimidine metabolism; CTP biosynthesis via de novo pathway; UDP from UMP (UMPK route): step 1/1. Its activity is regulated as follows. Inhibited by UTP. Catalyzes the reversible phosphorylation of UMP to UDP. The protein is Uridylate kinase of Rhodopseudomonas palustris (strain BisA53).